Consider the following 1099-residue polypeptide: Exonuclease/helicase subunit RexB (1099 aa).

Positions 766, 1056, 1059, and 1065 each coordinate [4Fe-4S] cluster.

Belongs to the helicase family. AddB/RexB type 2 subfamily. As to quaternary structure, heterodimer of RexA (AddA) and RexB. Requires Mg(2+) as cofactor. The cofactor is [4Fe-4S] cluster.

Functionally, the heterodimer acts both as an ATP-dependent DNA helicase and an ATP-dependent, dual-direction single-stranded exonuclease. Recognizes the L.lactis chi site (5'-GCGCGTG-3'), which stimulates homologous recombination. This subunit has 5'-&gt;3' exonuclease activity. Its function is as follows. The heterodimer acts as both an ATP-dependent DNA helicase and an ATP-dependent, dual-direction single-stranded exonuclease. Recognizes the chi site generating a DNA molecule suitable for the initiation of homologous recombination. This subunit has 5' -&gt; 3' nuclease activity but not helicase activity. The polypeptide is Exonuclease/helicase subunit RexB (Lactococcus lactis subsp. cremoris (strain MG1363)).